Reading from the N-terminus, the 655-residue chain is Integrin beta-5 (655 aa).

A VWFA domain is found at 1 to 234 (DLSLSMKDDL…QLIINAYNSI (234 aa)). The Extracellular portion of the chain corresponds to 1-575 (DLSLSMKDDL…REPECGNTPN (575 aa)). Ser-3 and Ser-5 together coordinate Mg(2+). Residues Ser-5, Asp-8, Asp-9, and Asp-40 each contribute to the Ca(2+) site. Cys-58 and Cys-67 are oxidised to a cystine. Asn-98, Asp-100, Pro-102, and Glu-103 together coordinate Ca(2+). Glu-103 contributes to the Mg(2+) binding site. The cysteines at positions 115 and 156 are disulfide-linked. Asn-203 carries N-linked (GlcNAc...) asparagine glycosylation. Position 218 (Gly-218) interacts with Ca(2+). 13 disulfide bridges follow: Cys-257/Cys-269, Cys-289/Cys-317, Cys-321/Cys-340, Cys-332/Cys-343, Cys-345/Cys-354, Cys-356/Cys-386, Cys-369/Cys-384, Cys-378/Cys-389, Cys-391/Cys-404, Cys-406/Cys-427, Cys-411/Cys-425, Cys-419/Cys-430, and Cys-432/Cys-441. Asn-316 is a glycosylation site (N-linked (GlcNAc...) asparagine). I-EGF domains are found at residues 321–355 (CSVG…TRCE), 356–405 (CQDG…PFCE), 406–442 (CDNF…DNCN), and 443–482 (CSTD…EMCE). Asn-408 carries N-linked (GlcNAc...) asparagine glycosylation. A glycan (N-linked (GlcNAc...) asparagine) is linked at Asn-442. 9 disulfides stabilise this stretch: Cys-443–Cys-466, Cys-450–Cys-464, Cys-458–Cys-469, Cys-471–Cys-481, Cys-484–Cys-487, Cys-491–Cys-538, Cys-497–Cys-517, Cys-500–Cys-513, and Cys-546–Cys-570. N-linked (GlcNAc...) asparagine glycans are attached at residues Asn-510 and Asn-561. The chain crosses the membrane as a helical span at residues 576–598 (AMTILLAVVGSILLVGLALLAIW). Over 599–655 (KLLVTIHDRREFAKFQSERSRARYEMASNPLYRKPISTHTVDFTFNKFNKSYNGTVD) the chain is Cytoplasmic. The residue at position 626 (Ser-626) is a Phosphoserine.

Belongs to the integrin beta chain family. As to quaternary structure, heterodimer of an alpha and a beta subunit. Beta-5 (ITGB5) associates with alpha-V (ITGAV). Interacts with MYO10. Interacts with DAB2. Integrin ITGAV:ITGB5 interacts with FBLN5 (via N-terminus). ITGAV:ITGB5 interacts with CCN3. Interacts with tensin TNS3; TNS3 also interacts with PEAK1, thus acting as an adapter molecule to bridge the association of PEAK1 with ITGB5.

Its subcellular location is the cell membrane. Integrin alpha-V/beta-5 (ITGAV:ITGB5) is a receptor for fibronectin. It recognizes the sequence R-G-D in its ligand. The polypeptide is Integrin beta-5 (ITGB5) (Papio cynocephalus (Yellow baboon)).